A 236-amino-acid chain; its full sequence is 15,16-dihydrobiliverdin:ferredoxin oxidoreductase (236 aa).

It belongs to the HY2 family.

The enzyme catalyses 15,16-dihydrobiliverdin + oxidized 2[4Fe-4S]-[ferredoxin] = biliverdin IXalpha + reduced 2[4Fe-4S]-[ferredoxin] + 2 H(+). Catalyzes the two-electron reduction of biliverdin IX-alpha at the C15 methine bridge. This chain is 15,16-dihydrobiliverdin:ferredoxin oxidoreductase, found in Prochlorococcus marinus (strain MIT 9515).